The sequence spans 79 residues: MKVLVAVLVFALLMCMFVDIAESRRRDNPEYPSGLRYDEEMGVFKRCAQTGGTCSKSKDCCIVTAICSTATSPKTCFYG.

Positions 1–23 (MKVLVAVLVFALLMCMFVDIAES) are cleaved as a signal peptide. Residues 24–46 (RRRDNPEYPSGLRYDEEMGVFKR) constitute a propeptide that is removed on maturation. Intrachain disulfides connect cysteine 47–cysteine 61, cysteine 54–cysteine 67, and cysteine 60–cysteine 76. Tyrosine 78 is subject to Tyrosine amide.

The protein resides in the secreted. It is found in the nematocyst. Alpha-toxins act on postsynaptic membranes, they bind to the nicotinic acetylcholine receptors (nAChR) and thus inhibit them. This toxin very weakly competes with alpha-bungarotoxin for binding to orthosteric sites on muscle-type T.carlifornicus (IC(50)=14.95 uM) and human alpha-7/CHRNA7 nAChRs (IC(50)&gt;45 uM). In Metridium senile (Brown sea anemone), this protein is Alpha-actitoxin-Ms11a-4.